Here is a 96-residue protein sequence, read N- to C-terminus: Co-chaperonin GroES (96 aa).

This sequence belongs to the GroES chaperonin family. As to quaternary structure, heptamer of 7 subunits arranged in a ring. Interacts with the chaperonin GroEL.

Its subcellular location is the cytoplasm. Functionally, together with the chaperonin GroEL, plays an essential role in assisting protein folding. The GroEL-GroES system forms a nano-cage that allows encapsulation of the non-native substrate proteins and provides a physical environment optimized to promote and accelerate protein folding. GroES binds to the apical surface of the GroEL ring, thereby capping the opening of the GroEL channel. This Alteromonas mediterranea (strain DSM 17117 / CIP 110805 / LMG 28347 / Deep ecotype) protein is Co-chaperonin GroES.